The following is a 215-amino-acid chain: Small ribosomal subunit protein uS7 (215 aa).

The protein belongs to the universal ribosomal protein uS7 family. In terms of assembly, part of the 30S ribosomal subunit.

Its function is as follows. One of the primary rRNA binding proteins, it binds directly to 16S rRNA where it nucleates assembly of the head domain of the 30S subunit. Is located at the subunit interface close to the decoding center. The polypeptide is Small ribosomal subunit protein uS7 (Pyrococcus furiosus (strain ATCC 43587 / DSM 3638 / JCM 8422 / Vc1)).